The primary structure comprises 401 residues: Methyltransferase cfoC (401 aa).

D268 provides a ligand contact to S-adenosyl-L-methionine. Residue H308 is the Proton acceptor of the active site.

The protein belongs to the class I-like SAM-binding methyltransferase superfamily. Cation-independent O-methyltransferase family.

It participates in secondary metabolite biosynthesis; flavonoid biosynthesis. Methyltransferase; part of the gene cluster that mediates the biosynthesis of chlorflavonin, a fungal flavonoid with acetolactate synthase inhibitory activity. Within the pathway, cfoC is responsible for the methylation at position C8-OH of flavonoid. The pathway begins with the PKS-NRPS hybrid synthetase cfoA that uses benzoic acid or p-hydroxybenzoic acid as a starter unit with four rounds of chain elongation using malonyl-CoA to form the chalcone skeleton. Then, a new type of chalcone isomerase, cfoK, catalyzes the conversion of the chalcone into a flavanone by a histidine-mediated oxa-Michael addition mechanism. The desaturation of flavanone to flavone is catalyzed by a new type of flavone synthase, the flavin mononucleotide (FMN)-dependent oxidoreductase cfoJ. Monooxygenases cfoF, cfoG, and P450 cfoH are responsible for the hydroxylation of the flavonoid skeleton at sites C3, C8, and C2', respectively. Like cfoF, the dehydratase cfoI also plays a role in the hydroxylation of position C3. Methyltransferases cfoB, cfoC, and cfoD then catalyze the methylation of C7-OH, C8-OH, and C3-OH, respectively. Finally, the monooxygenase cfoE is responsible for the chlorination of flavonoid at position C3'. This Aspergillus candidus protein is Methyltransferase cfoC.